Reading from the N-terminus, the 291-residue chain is Light-independent protochlorophyllide reductase iron-sulfur ATP-binding protein (291 aa).

Residues 10–15 (GIGKST) and K39 contribute to the ATP site. Residue S14 participates in Mg(2+) binding. [4Fe-4S] cluster-binding residues include C95 and C129. 180-181 (NR) provides a ligand contact to ATP.

Belongs to the NifH/BchL/ChlL family. In terms of assembly, homodimer. Protochlorophyllide reductase is composed of three subunits; ChlL, ChlN and ChlB. [4Fe-4S] cluster is required as a cofactor.

Its subcellular location is the plastid. The protein resides in the chloroplast. The catalysed reaction is chlorophyllide a + oxidized 2[4Fe-4S]-[ferredoxin] + 2 ADP + 2 phosphate = protochlorophyllide a + reduced 2[4Fe-4S]-[ferredoxin] + 2 ATP + 2 H2O. Its pathway is porphyrin-containing compound metabolism; chlorophyll biosynthesis (light-independent). Functionally, component of the dark-operative protochlorophyllide reductase (DPOR) that uses Mg-ATP and reduced ferredoxin to reduce ring D of protochlorophyllide (Pchlide) to form chlorophyllide a (Chlide). This reaction is light-independent. The L component serves as a unique electron donor to the NB-component of the complex, and binds Mg-ATP. In Larix decidua (European larch), this protein is Light-independent protochlorophyllide reductase iron-sulfur ATP-binding protein.